A 209-amino-acid chain; its full sequence is Probable GTP-binding protein EngB (209 aa).

An EngB-type G domain is found at 12–203 (VSFEIIFVGR…RDRLHEMKRD (192 aa)). GTP is bound by residues 20-27 (GRSNVGKS), 45-49 (GVTLR), 62-65 (DMPG), 142-145 (NKMD), and 179-181 (ISA). Mg(2+) is bound by residues serine 27 and threonine 47.

Belongs to the TRAFAC class TrmE-Era-EngA-EngB-Septin-like GTPase superfamily. EngB GTPase family. It depends on Mg(2+) as a cofactor.

Functionally, necessary for normal cell division and for the maintenance of normal septation. The sequence is that of Probable GTP-binding protein EngB from Methanosarcina barkeri (strain Fusaro / DSM 804).